Reading from the N-terminus, the 341-residue chain is Flap endonuclease 1 (341 aa).

The interval 1–98 (MGVQIGELIP…RELEKRREAR (98 aa)) is N-domain. Mg(2+) contacts are provided by Asp27, Asp80, Glu152, Glu154, Asp173, Asp175, and Asp236. Positions 116-258 (EAKKYAMRAT…KALTIVKRTK (143 aa)) are I-domain. An interaction with PCNA region spans residues 330 to 338 (KQSTLESWF).

The protein belongs to the XPG/RAD2 endonuclease family. FEN1 subfamily. As to quaternary structure, interacts with PCNA. PCNA stimulates the nuclease activity without altering cleavage specificity. Mg(2+) is required as a cofactor.

Its function is as follows. Structure-specific nuclease with 5'-flap endonuclease and 5'-3' exonuclease activities involved in DNA replication and repair. During DNA replication, cleaves the 5'-overhanging flap structure that is generated by displacement synthesis when DNA polymerase encounters the 5'-end of a downstream Okazaki fragment. Binds the unpaired 3'-DNA end and kinks the DNA to facilitate 5' cleavage specificity. Cleaves one nucleotide into the double-stranded DNA from the junction in flap DNA, leaving a nick for ligation. Also involved in the base excision repair (BER) pathway. Acts as a genome stabilization factor that prevents flaps from equilibrating into structures that lead to duplications and deletions. Also possesses 5'-3' exonuclease activity on nicked or gapped double-stranded DNA. This is Flap endonuclease 1 from Thermococcus onnurineus (strain NA1).